The sequence spans 87 residues: Alpha-toxin To2 (87 aa).

A signal peptide spans 1-20 (MIRFVLFISCFFLIGTVVEC). Residues 22–84 (KDGYLMEGDG…IWDSKNNKCG (63 aa)) form the LCN-type CS-alpha/beta domain. Cystine bridges form between Cys-32-Cys-83, Cys-36-Cys-58, Cys-44-Cys-64, and Cys-48-Cys-66. At Lys-85 the chain carries Lysine amide.

In terms of tissue distribution, expressed by the venom gland.

Its subcellular location is the secreted. Functionally, alpha toxins bind voltage-independently at site-3 of sodium channels (Nav) and inhibit the inactivation of the activated channels, thereby blocking neuronal transmission. Affects the tetrodotoxin-sensitive sodium current permeability of F-11 rat neuroblastoma cells. Produces a dose dependent increase in amplitude and duration of the current. The polypeptide is Alpha-toxin To2 (Tityus obscurus (Amazonian scorpion)).